The sequence spans 549 residues: Peptide transport periplasmic protein SapA (549 aa).

The signal sequence occupies residues 1-21; the sequence is MRLVLSSLIVIAGLLSSQATA.

It belongs to the bacterial solute-binding protein 5 family.

Its subcellular location is the periplasm. Its function is as follows. Involved in a peptide intake transport system that plays a role in the resistance to antimicrobial peptides. This chain is Peptide transport periplasmic protein SapA, found in Salmonella typhimurium (strain LT2 / SGSC1412 / ATCC 700720).